Reading from the N-terminus, the 67-residue chain is Large ribosomal subunit protein uL29 (67 aa).

The protein belongs to the universal ribosomal protein uL29 family.

The polypeptide is Large ribosomal subunit protein uL29 (Magnetococcus marinus (strain ATCC BAA-1437 / JCM 17883 / MC-1)).